The chain runs to 1486 residues: Chromosome partition protein MukB (1486 aa).

34 to 41 provides a ligand contact to ATP; sequence GGNGAGKS. Coiled-coil stretches lie at residues 326–418, 444–480, and 509–603; these read LEAD…QYNQ, LETF…QAYQ, and RHLA…RAPV. The interval 666-783 is flexible hinge; it reads PGGSEDQRLN…EVPLFGRAAR (118 aa). Coiled coils occupy residues 835–923, 977–1115, and 1209–1266; these read EAEI…AKLE, EMLS…TAKA, and VEAI…QNVS.

Belongs to the SMC family. MukB subfamily. Homodimerization via its hinge domain. Binds to DNA via its C-terminal region. Interacts, and probably forms a ternary complex, with MukE and MukF via its C-terminal region. The complex formation is stimulated by calcium or magnesium. Interacts with tubulin-related protein FtsZ.

The protein localises to the cytoplasm. The protein resides in the nucleoid. In terms of biological role, plays a central role in chromosome condensation, segregation and cell cycle progression. Functions as a homodimer, which is essential for chromosome partition. Involved in negative DNA supercoiling in vivo, and by this means organize and compact chromosomes. May achieve or facilitate chromosome segregation by condensation DNA from both sides of a centrally located replisome during cell division. The sequence is that of Chromosome partition protein MukB from Escherichia fergusonii (strain ATCC 35469 / DSM 13698 / CCUG 18766 / IAM 14443 / JCM 21226 / LMG 7866 / NBRC 102419 / NCTC 12128 / CDC 0568-73).